Consider the following 1136-residue polypeptide: Protein stu-1 (1136 aa).

2 HEAT repeats span residues 95 to 133 (TLPV…ERSV) and 167 to 205 (YVPT…KSDL). Disordered stretches follow at residues 524–554 (KDPH…MGAP), 567–794 (RAMA…QPQI), and 821–884 (TAGQ…LLDS). Residues 595-622 (VSSTSQASVASASTASAVPAPTKSAFGA) are compositionally biased toward low complexity. Pro residues predominate over residues 659–668 (PAEPASPPSK). Residues 673–683 (TVTSPKTQTLV) are compositionally biased toward polar residues. A compositionally biased stretch (low complexity) spans 701–716 (SSESGIPIPVSGISSP). Composition is skewed to polar residues over residues 777 to 793 (LPTQ…QQPQ) and 822 to 833 (AGQTQPQSTYTS).

The protein belongs to the CLASP family. As to quaternary structure, interacts with microtubules.

The protein resides in the nucleus. The protein localises to the cytoplasm. It localises to the cytoskeleton. Its subcellular location is the spindle. In terms of biological role, microtubule binding protein that promotes the stabilization of dynamic microtubules. Required for mitotic spindle formation. The protein is Protein stu-1 (stu-1) of Neurospora crassa (strain ATCC 24698 / 74-OR23-1A / CBS 708.71 / DSM 1257 / FGSC 987).